The chain runs to 770 residues: MSPKTLYDKVFEDHIVYEDESGSNLLYIDRHLVHEVTSPQAFEGLKNAGRTVRRTDCTLATVDHNIPTISRVNFKTLLTFIDQDDSRLQVQTLEQNVKDFDVTYFGMTDDRQGIVHVVGPEQGFTLPGTTVVCGDSHTSTHGAFGALAFGIGTSEVEHVLATQTTIQANPKNMRITIDGELSEGITSKDLVLHVIGVIGTAGGTGCVIEFAGKAIEDLSMEARMSICNMAIEAGARAGMIKPDEKTFEYIKGRPLAPKGDEWEKALKYWKTLHTDDGAKLHYDIKIAASDIVPTITWGNSPQDALPITASVPDPANVSDPIKKSGMERALKYQGLTPNTPFVVIKMHKAFIGSCTNSRIEDLRAAAKVAKGHKKADNVKLVLVVPGSGLIKKQAEKEGLDKIFESAGFTWREAGCSMCLGMNPDILDPEERCASTSNRNFEGRQGARSRTHLMSPAMAAAAAIKGHFTDIREFDYVDNDEPSITIEHEVEDKELQDAVYEHEKEIIEGTPGTEAERSTTSLKMNQNSKKPNQMLIKMVPITVLPFLTGITAPLYKANVDTDAIIPKQFLKTIKRTGLKNGLFYESRFVKMPMVRCQTDFVLNVEPYRQAEILLVTGDNFGCGSSREHAPWALKDFGIKSIIAPSFGDIFYNNSFKNFLLPIRIPQDVIESKLVPVVKAGHKLTIDLPNQQIKDGETGDVLIEKFDVEEFRKHCLVNGLDDIGLTLQKEEYIQEYEAKRREKFSFLEGGSKLIKPIKGTKKSIYGNKAQEW.

Positions 354, 415, and 418 each coordinate [4Fe-4S] cluster.

It belongs to the aconitase/IPM isomerase family. Monomer. [4Fe-4S] cluster serves as cofactor.

The catalysed reaction is (2R,3S)-3-isopropylmalate = (2S)-2-isopropylmalate. It participates in amino-acid biosynthesis; L-leucine biosynthesis; L-leucine from 3-methyl-2-oxobutanoate: step 2/4. Catalyzes the isomerization between 2-isopropylmalate and 3-isopropylmalate, via the formation of 2-isopropylmaleate. In Candida maltosa (Yeast), this protein is 3-isopropylmalate dehydratase (LEU1).